The sequence spans 273 residues: Aspartate/glutamate leucyltransferase (273 aa).

The protein belongs to the R-transferase family. Bpt subfamily.

The protein resides in the cytoplasm. It catalyses the reaction N-terminal L-glutamyl-[protein] + L-leucyl-tRNA(Leu) = N-terminal L-leucyl-L-glutamyl-[protein] + tRNA(Leu) + H(+). The enzyme catalyses N-terminal L-aspartyl-[protein] + L-leucyl-tRNA(Leu) = N-terminal L-leucyl-L-aspartyl-[protein] + tRNA(Leu) + H(+). Its function is as follows. Functions in the N-end rule pathway of protein degradation where it conjugates Leu from its aminoacyl-tRNA to the N-termini of proteins containing an N-terminal aspartate or glutamate. In Ruegeria pomeroyi (strain ATCC 700808 / DSM 15171 / DSS-3) (Silicibacter pomeroyi), this protein is Aspartate/glutamate leucyltransferase.